We begin with the raw amino-acid sequence, 288 residues long: Syntaxin PEP12 (288 aa).

Residues 1–268 lie on the Cytoplasmic side of the membrane; sequence MSEDEFFGGD…RYQKRTSRWR (268 aa). 2 positions are modified to phosphoserine: S2 and S23. Residues 195 to 257 form the t-SNARE coiled-coil homology domain; it reads QNLIEQRDQE…QLASDELRKA (63 aa). Residues 269–288 form a helical; Anchor for type IV membrane protein membrane-spanning segment; sequence VYLLIVLLVMLLFIFLIMKL.

The protein belongs to the syntaxin family. In terms of processing, ubiquitinated.

The protein localises to the membrane. In terms of biological role, plays a role in the sorting and targeting of vacuolar proteases. This is Syntaxin PEP12 (PEP12) from Saccharomyces cerevisiae (strain ATCC 204508 / S288c) (Baker's yeast).